A 313-amino-acid chain; its full sequence is MAATSLVLTCASPLFSSPRVISATKKLTTELSISTAKFRRRCSGNNDEVLLEGMPPEYYDDEWQARQREKTKELRRMQREEEEEEERKIEEYREIGTRLKEFPEQDLRKARKLVSSFIRAAEEVEERIEEAAEKGELDELVLMIIWNRLDLARRDDEKDAIRSLDLLYRRVETEILKRQASPAMKLLNDLLNMHDGFEDDAWLKDCRKRMAETFPREDPFSILMPPGFDIDMHQGQLRPPIETETDNTLLRVDFVREVDALLQEVRIEEDATTGSKGEGLDPEAIALKFKQQEKQRTIRQIEAILDLALNLKW.

The transit peptide at 1-22 (MAATSLVLTCASPLFSSPRVIS) directs the protein to the chloroplast.

As to expression, expressed in green tissues, including leaves. Accumulates in chloroplasts of mature stomatal guard cells.

It is found in the plastid. Its subcellular location is the chloroplast. The protein resides in the chromoplast. It localises to the etioplast. The protein localises to the amyloplast. Its function is as follows. Required for the differentiation of chloroplast from proplastids or etioplasts, probably by modulating some chloroplast-encoded genes expression and mRNA maturation. Involved in leaf-cells differentiation. The sequence is that of Protein PALE CRESS, chloroplastic (PAC) from Arabidopsis thaliana (Mouse-ear cress).